We begin with the raw amino-acid sequence, 227 residues long: Uracil-DNA glycosylase (227 aa).

D64 (proton acceptor) is an active-site residue.

The protein belongs to the uracil-DNA glycosylase (UDG) superfamily. UNG family.

It is found in the cytoplasm. The enzyme catalyses Hydrolyzes single-stranded DNA or mismatched double-stranded DNA and polynucleotides, releasing free uracil.. In terms of biological role, excises uracil residues from the DNA which can arise as a result of misincorporation of dUMP residues by DNA polymerase or due to deamination of cytosine. The sequence is that of Uracil-DNA glycosylase from Alkaliphilus metalliredigens (strain QYMF).